The primary structure comprises 493 residues: 1-aminocyclopropane-1-carboxylate synthase 1 (493 aa).

Lys279 is modified (N6-(pyridoxal phosphate)lysine).

It belongs to the class-I pyridoxal-phosphate-dependent aminotransferase family. In terms of assembly, homodimer. It depends on pyridoxal 5'-phosphate as a cofactor.

It catalyses the reaction S-adenosyl-L-methionine = 1-aminocyclopropane-1-carboxylate + S-methyl-5'-thioadenosine + H(+). The protein operates within alkene biosynthesis; ethylene biosynthesis via S-adenosyl-L-methionine; ethylene from S-adenosyl-L-methionine: step 1/2. Catalyzes the formation of 1-aminocyclopropane-1-carboxylate, a direct precursor of ethylene in higher plants. The protein is 1-aminocyclopropane-1-carboxylate synthase 1 (ACC1A) of Cucurbita pepo (Vegetable marrow).